A 349-amino-acid chain; its full sequence is Protein RecA (349 aa).

65–72 (GPESSGKT) contacts ATP. Residues 329–349 (KASDQTAAHDETEEEPDLLES) are disordered. Over residues 339–349 (ETEEEPDLLES) the composition is skewed to acidic residues.

The protein belongs to the RecA family.

The protein localises to the cytoplasm. Can catalyze the hydrolysis of ATP in the presence of single-stranded DNA, the ATP-dependent uptake of single-stranded DNA by duplex DNA, and the ATP-dependent hybridization of homologous single-stranded DNAs. It interacts with LexA causing its activation and leading to its autocatalytic cleavage. The chain is Protein RecA from Acinetobacter baylyi (strain ATCC 33305 / BD413 / ADP1).